A 320-amino-acid polypeptide reads, in one-letter code: tRNA U34 carboxymethyltransferase (320 aa).

Residues K89, W103, K108, G128, 150–152 (DPT), 179–180 (IE), M194, Y198, and R313 each bind carboxy-S-adenosyl-L-methionine.

This sequence belongs to the class I-like SAM-binding methyltransferase superfamily. CmoB family. As to quaternary structure, homotetramer.

It catalyses the reaction carboxy-S-adenosyl-L-methionine + 5-hydroxyuridine(34) in tRNA = 5-carboxymethoxyuridine(34) in tRNA + S-adenosyl-L-homocysteine + H(+). Functionally, catalyzes carboxymethyl transfer from carboxy-S-adenosyl-L-methionine (Cx-SAM) to 5-hydroxyuridine (ho5U) to form 5-carboxymethoxyuridine (cmo5U) at position 34 in tRNAs. The polypeptide is tRNA U34 carboxymethyltransferase (Actinobacillus pleuropneumoniae serotype 3 (strain JL03)).